We begin with the raw amino-acid sequence, 400 residues long: Acetate kinase (400 aa).

Asparagine 10 is a Mg(2+) binding site. Residue lysine 17 participates in ATP binding. Arginine 91 provides a ligand contact to substrate. The active-site Proton donor/acceptor is the aspartate 150. ATP contacts are provided by residues 210-214 (HLGNG), 285-287 (DCR), and 333-337 (GIGEN). Residue glutamate 387 coordinates Mg(2+).

Belongs to the acetokinase family. Homodimer. It depends on Mg(2+) as a cofactor. Mn(2+) serves as cofactor.

The protein resides in the cytoplasm. The catalysed reaction is acetate + ATP = acetyl phosphate + ADP. Its pathway is metabolic intermediate biosynthesis; acetyl-CoA biosynthesis; acetyl-CoA from acetate: step 1/2. In terms of biological role, catalyzes the formation of acetyl phosphate from acetate and ATP. Can also catalyze the reverse reaction. The protein is Acetate kinase of Cronobacter sakazakii (strain ATCC BAA-894) (Enterobacter sakazakii).